The chain runs to 174 residues: Shikimate kinase 2 (174 aa).

12–17 (GCGKTT) provides a ligand contact to ATP. Mg(2+) contacts are provided by Thr-16 and Asp-32. 3 residues coordinate substrate: Asp-34, Arg-58, and Gly-79. The interval 112 to 126 (QAAPEEDLRPTLTGK) is LID domain. Arg-120 is an ATP binding site. Arg-139 contributes to the substrate binding site.

Belongs to the shikimate kinase family. AroL subfamily. Monomer. Requires Mg(2+) as cofactor.

It localises to the cytoplasm. The enzyme catalyses shikimate + ATP = 3-phosphoshikimate + ADP + H(+). The protein operates within metabolic intermediate biosynthesis; chorismate biosynthesis; chorismate from D-erythrose 4-phosphate and phosphoenolpyruvate: step 5/7. Catalyzes the specific phosphorylation of the 3-hydroxyl group of shikimic acid using ATP as a cosubstrate. In Shigella boydii serotype 4 (strain Sb227), this protein is Shikimate kinase 2.